The chain runs to 872 residues: Serine/threonine-protein phosphatase 1 regulatory subunit 10 (872 aa).

Positions 1-348 (MGSGPIDPKE…EPAAPAEPMD (348 aa)) are interaction with TOX4. A TFIIS N-terminal domain is found at 73 to 147 (KLLNSWLTYS…SDWMAVIRSQ (75 aa)). Disordered regions lie at residues 147-213 (QSST…STGL), 247-270 (SATA…NTTP), 307-398 (KKKK…KRKT), and 534-837 (VETL…HGGD). Basic and acidic residues-rich tracts occupy residues 153–166 (AEKD…EGKS) and 174–196 (PLTE…EKPK). Lysine 179 is covalently cross-linked (Glycyl lysine isopeptide (Lys-Gly) (interchain with G-Cter in SUMO2)). The span at 248-258 (ATAAPGDAAPP) shows a compositional bias: low complexity. A Glycyl lysine isopeptide (Lys-Gly) (interchain with G-Cter in SUMO2) cross-link involves residue lysine 262. Serine 313 carries the post-translational modification Phosphoserine. Residues 325–336 (KTSTEPSTAKPS) show a composition bias toward low complexity. Residues 357 to 433 (PAVEVPELMD…NKIKDFGEAA (77 aa)) form a necessary for interaction with PPP1CA region. The residue at position 382 (serine 382) is a Phosphoserine. Residues 393-408 (GRKRKTVTWPEEGKLR) are necessary for interaction with PPP1CC. The PP1-binding motif signature appears at 394 to 423 (RKRKTVTWPEEGKLREYFYFELDETERVNV). Threonine 398 is modified (phosphothreonine; by PKA). Positions 418 to 619 (TERVNVNKIK…LKQMLVPHGL (202 aa)) are interaction with WDR82. Over residues 540-551 (GGSGGSPDGAGG) the composition is skewed to gly residues. Phosphoserine occurs at positions 545 and 591. A compositionally biased stretch (polar residues) spans 583 to 595 (EILTSIMGSPNNH). The span at 596–611 (PSEELLKQPDYSDKLK) shows a compositional bias: basic and acidic residues. The segment covering 644-655 (PPGPGGPMPGPH) has biased composition (pro residues). Arginine 665 is modified (omega-N-methylarginine). A compositionally biased stretch (low complexity) spans 674–690 (RGGDPFWDGPGDPMRGG). An omega-N-methylarginine mark is found at arginine 693 and arginine 737. Residues 724 to 762 (ARGGRSGGGPPNGRGGPGGGGMVGGGGHRPHEGPGGSMG) show a composition bias toward gly residues. A compositionally biased stretch (basic and acidic residues) spans 795–835 (PHDVPSHRGHDHRGPPPHEHRGHDGHGGGGHRGHDGGHSHG). The C3H1-type zinc finger occupies 838–866 (MSNRPVCRHFMMKGNCRYENNCAFYHPGV).

As to quaternary structure, component of the PNUTS-PP1 complex (also named PTW/PP1 complex), composed of PPP1R10/PNUTS, TOX4, WDR82, and PPP1CA (or PPP1CB or PPP1CC). Post-translationally, phosphorylated on Thr-398 by PKA within the region necessary for interaction with PPP1CA. As to expression, expressed in testis, brain and intestine (at protein level). Highly expressed in testis.

It is found in the nucleus. Its subcellular location is the chromosome. In terms of biological role, substrate-recognition component of the PNUTS-PP1 protein phosphatase complex, a protein phosphatase 1 (PP1) complex that promotes RNA polymerase II transcription pause-release, allowing transcription elongation. Promoter-proximal pausing by RNA polymerase II is a transcription halt following transcription initiation but prior to elongation, which acts as a checkpoint to control that transcripts are favorably configured for transcriptional elongation. The PNUTS-PP1 complex mediates the release of RNA polymerase II from promoter-proximal region of genes by catalyzing dephosphorylation of proteins involved in transcription, such as AFF4, CDK9, MEPCE, INTS12, NCBP1, POLR2M/GDOWN1 and SUPT6H. The PNUTS-PP1 complex also regulates RNA polymerase II transcription termination by mediating dephosphorylation of SUPT5H in termination zones downstream of poly(A) sites, thereby promoting deceleration of RNA polymerase II transcription. PNUTS-PP1 complex is also involved in the response to replication stress by mediating dephosphorylation of POLR2A at 'Ser-5' of the CTD, promoting RNA polymerase II degradation. The PNUTS-PP1 complex also plays a role in the control of chromatin structure and cell cycle progression during the transition from mitosis into interphase. PNUTS-PP1 complex mediates dephosphorylation of MYC, promoting MYC stability by preventing MYC ubiquitination by the SCF(FBXW7) complex. In addition to acts as a substrate-recognition component, PPP1R10/PNUTS also acts as a nuclear targeting subunit for the PNUTS-PP1 complex. In some context, PPP1R10/PNUTS also acts as an inhibitor of protein phosphatase 1 (PP1) activity by preventing access to substrates. The sequence is that of Serine/threonine-protein phosphatase 1 regulatory subunit 10 from Rattus norvegicus (Rat).